A 488-amino-acid polypeptide reads, in one-letter code: Transmembrane protein 39A (488 aa).

N-linked (GlcNAc...) asparagine glycosylation is found at asparagine 31 and asparagine 39. The next 8 membrane-spanning stretches (helical) occupy residues 72 to 92, 110 to 130, 154 to 174, 182 to 202, 287 to 307, 319 to 339, 420 to 440, and 446 to 466; these read SLLFEFLFFIYLLVALFIQYI, TSLNFHLIDYHLAAFITVMLA, VLISARLVLLTLCGWVLCWTL, SVLNLLFLGYPFGVYVPLCCF, EVLFNSLFSAYYVAFLPLCFV, CEHLIMVWINAFVMLTTQLLP, LLNLLILIEGSVVFYQLYSLL, and NHTLSMALILFCNYYVLFKLL.

It belongs to the TMEM39 family. Interacts with SACM1L, SEC23A and SEC24A. As to quaternary structure, (Microbial infection) Interacts with encephalomyocarditis virus (EMCV) major capsid proteins VP1 and VP2. In terms of tissue distribution, up-regulated in brain tumor glioblastoma multiforme cells (at protein level).

Its subcellular location is the endoplasmic reticulum membrane. Its function is as follows. Regulates autophagy by controlling the spatial distribution and levels of the intracellular phosphatidylinositol 4-phosphate (PtdIns(4)P) pools. Modulates (PtdIns(4)P) levels by regulating the ER-to-Golgi trafficking of the phosphatidylinositide phosphatase SACM1L. Functionally, (Microbial infection) Positively regulates the replication of encephalomyocarditis virus (EMCV) via autophagy-dependent pathway. This chain is Transmembrane protein 39A (TMEM39A), found in Homo sapiens (Human).